The chain runs to 61 residues: Large ribosomal subunit protein uL30 (61 aa).

This sequence belongs to the universal ribosomal protein uL30 family. In terms of assembly, part of the 50S ribosomal subunit.

The sequence is that of Large ribosomal subunit protein uL30 from Chlorobaculum tepidum (strain ATCC 49652 / DSM 12025 / NBRC 103806 / TLS) (Chlorobium tepidum).